The primary structure comprises 644 residues: DNA mismatch repair protein MutL (644 aa).

Positions 336–400 are disordered; sequence ERPFEPSSPQ…EISRDSSLGE (65 aa). Over residues 373–400 the composition is skewed to basic and acidic residues; that stretch reads SKTHSTWDEASRVDTSRAEISRDSSLGE.

It belongs to the DNA mismatch repair MutL/HexB family.

This protein is involved in the repair of mismatches in DNA. It is required for dam-dependent methyl-directed DNA mismatch repair. May act as a 'molecular matchmaker', a protein that promotes the formation of a stable complex between two or more DNA-binding proteins in an ATP-dependent manner without itself being part of a final effector complex. This Shewanella sp. (strain MR-7) protein is DNA mismatch repair protein MutL.